The primary structure comprises 270 residues: Putative phosphoenolpyruvate synthase regulatory protein (270 aa).

149–156 (GVSRSGKT) contacts ADP.

The protein belongs to the pyruvate, phosphate/water dikinase regulatory protein family. PSRP subfamily.

It carries out the reaction [pyruvate, water dikinase] + ADP = [pyruvate, water dikinase]-phosphate + AMP + H(+). The catalysed reaction is [pyruvate, water dikinase]-phosphate + phosphate + H(+) = [pyruvate, water dikinase] + diphosphate. Bifunctional serine/threonine kinase and phosphorylase involved in the regulation of the phosphoenolpyruvate synthase (PEPS) by catalyzing its phosphorylation/dephosphorylation. This is Putative phosphoenolpyruvate synthase regulatory protein from Alteromonas mediterranea (strain DSM 17117 / CIP 110805 / LMG 28347 / Deep ecotype).